The sequence spans 360 residues: MTTWVIKIGTSLLRGNDKYTTFDVINDYCSYISKAQRNGDKIILVSSGAVGLGCHQMRFKTRPKEIISLQASAAIGQLHLMALYEKAMSSFGYKVAQILLTRSELGSRNSYNSASQTLKRLLEWDVIPIVNENDITSDEELKYGDNDTLSALVATAISADQLILLTDIDHLYSSDPKINSKAKPIKDINNSKELNNLELANEQTSWGTGGIKTKLTAAKIATESGIKVQLADGRDPKILGELLDGKKIGTVFHPNPNPIGNRKSWLAHAIKPVGEIHLDDGASEAIKNKGASLLLVGVKKVSGDFIANQPVKVINTEGEEFAKGICSMSSDAIKIGINSRSETTGSPLVIHRDVLVLTSE.

K7 contributes to the ATP binding site. The substrate site is built by S47, D134, and N146. Residues 166–167 (TD) and 208–214 (TGGIKTK) each bind ATP. The PUA domain maps to 273–344 (VGEIHLDDGA…IGINSRSETT (72 aa)).

This sequence belongs to the glutamate 5-kinase family.

The protein resides in the cytoplasm. It carries out the reaction L-glutamate + ATP = L-glutamyl 5-phosphate + ADP. The protein operates within amino-acid biosynthesis; L-proline biosynthesis; L-glutamate 5-semialdehyde from L-glutamate: step 1/2. Catalyzes the transfer of a phosphate group to glutamate to form L-glutamate 5-phosphate. In Prochlorococcus marinus (strain NATL2A), this protein is Glutamate 5-kinase.